The chain runs to 159 residues: Ribosomal RNA large subunit methyltransferase H (159 aa).

S-adenosyl-L-methionine-binding positions include glycine 108 and 127-132; that span reads FSKMTF.

It belongs to the RNA methyltransferase RlmH family. In terms of assembly, homodimer.

The protein localises to the cytoplasm. It catalyses the reaction pseudouridine(1915) in 23S rRNA + S-adenosyl-L-methionine = N(3)-methylpseudouridine(1915) in 23S rRNA + S-adenosyl-L-homocysteine + H(+). Its function is as follows. Specifically methylates the pseudouridine at position 1915 (m3Psi1915) in 23S rRNA. This Clostridium beijerinckii (strain ATCC 51743 / NCIMB 8052) (Clostridium acetobutylicum) protein is Ribosomal RNA large subunit methyltransferase H.